The sequence spans 295 residues: N-acetylmuramic acid 6-phosphate etherase (295 aa).

In terms of domain architecture, SIS spans 54-217 (VIAAFRRGGR…STASMVGIGK (164 aa)). E82 acts as the Proton donor in catalysis. E113 is an active-site residue.

This sequence belongs to the GCKR-like family. MurNAc-6-P etherase subfamily. In terms of assembly, homodimer.

The catalysed reaction is N-acetyl-D-muramate 6-phosphate + H2O = N-acetyl-D-glucosamine 6-phosphate + (R)-lactate. Its pathway is amino-sugar metabolism; N-acetylmuramate degradation. Functionally, specifically catalyzes the cleavage of the D-lactyl ether substituent of MurNAc 6-phosphate, producing GlcNAc 6-phosphate and D-lactate. In Geobacillus thermodenitrificans (strain NG80-2), this protein is N-acetylmuramic acid 6-phosphate etherase.